A 111-amino-acid chain; its full sequence is T cell receptor beta variable 20-1 (111 aa).

The first 15 residues, 1 to 15, serve as a signal peptide directing secretion; it reads MLLLLLLLGPGSGLG. The 96-residue stretch at 16 to 111 folds into the Ig-like domain; sequence AVVSQHPSRV…DSSFYICSAR (96 aa). A disulfide bridge connects residues C37 and C108.

As to quaternary structure, alpha-beta TR is a heterodimer composed of an alpha and beta chain; disulfide-linked. The alpha-beta TR is associated with the transmembrane signaling CD3 coreceptor proteins to form the TR-CD3 (TcR or TCR). The assembly of alpha-beta TR heterodimers with CD3 occurs in the endoplasmic reticulum where a single alpha-beta TR heterodimer associates with one CD3D-CD3E heterodimer, one CD3G-CD3E heterodimer and one CD247 homodimer forming a stable octameric structure. CD3D-CD3E and CD3G-CD3E heterodimers preferentially associate with TR alpha and TR beta chains, respectively. The association of the CD247 homodimer is the last step of TcR assembly in the endoplasmic reticulum and is required for transport to the cell surface.

Its subcellular location is the cell membrane. Its function is as follows. V region of the variable domain of T cell receptor (TR) beta chain that participates in the antigen recognition. Alpha-beta T cell receptors are antigen specific receptors which are essential to the immune response and are present on the cell surface of T lymphocytes. Recognize peptide-major histocompatibility (MH) (pMH) complexes that are displayed by antigen presenting cells (APC), a prerequisite for efficient T cell adaptive immunity against pathogens. Binding of alpha-beta TR to pMH complex initiates TR-CD3 clustering on the cell surface and intracellular activation of LCK that phosphorylates the ITAM motifs of CD3G, CD3D, CD3E and CD247 enabling the recruitment of ZAP70. In turn ZAP70 phosphorylates LAT, which recruits numerous signaling molecules to form the LAT signalosome. The LAT signalosome propagates signal branching to three major signaling pathways, the calcium, the mitogen-activated protein kinase (MAPK) kinase and the nuclear factor NF-kappa-B (NF-kB) pathways, leading to the mobilization of transcription factors that are critical for gene expression and essential for T cell growth and differentiation. The T cell repertoire is generated in the thymus, by V-(D)-J rearrangement. This repertoire is then shaped by intrathymic selection events to generate a peripheral T cell pool of self-MH restricted, non-autoaggressive T cells. Post-thymic interaction of alpha-beta TR with the pMH complexes shapes TR structural and functional avidity. This chain is T cell receptor beta variable 20-1, found in Homo sapiens (Human).